We begin with the raw amino-acid sequence, 544 residues long: Ribosomal oxygenase 1 (544 aa).

The segment at 1 to 78 (MERKHMSALS…HEGERDCREM (78 aa)) is disordered. Residues 10–19 (SIYQSLSGGK) show a composition bias toward polar residues. Over residues 42 to 53 (PSKKATKKKGTK) the composition is skewed to basic residues. Basic and acidic residues predominate over residues 63 to 78 (SSEKEKHEGERDCREM). In terms of domain architecture, JmjC spans 197–342 (CSIRMLNPQA…DLMLKLMPAA (146 aa)). 3 residues coordinate Fe cation: His243, Asp245, and His308.

It belongs to the ROX family. NO66 subfamily. Requires Fe(2+) as cofactor.

It is found in the nucleus. The protein localises to the nucleolus. Its subcellular location is the nucleoplasm. The enzyme catalyses N(6),N(6)-dimethyl-L-lysyl(36)-[histone H3] + 2 2-oxoglutarate + 2 O2 = L-lysyl(36)-[histone H3] + 2 formaldehyde + 2 succinate + 2 CO2. The catalysed reaction is N(6)-methyl-L-lysyl-[protein] + 2-oxoglutarate + O2 = L-lysyl-[protein] + formaldehyde + succinate + CO2. It carries out the reaction L-histidyl-[protein] + 2-oxoglutarate + O2 = (3S)-3-hydroxy-L-histidyl-[protein] + succinate + CO2. Functionally, oxygenase that can act as both a histone lysine demethylase and a ribosomal histidine hydroxylase. Specifically demethylates 'Lys-4' (H3K4me) and 'Lys-36' (H3K36me) of histone H3, thereby playing a central role in histone code. Preferentially demethylates trimethylated H3 'Lys-4' (H3K4me3) and monomethylated H3 'Lys-4' (H3K4me1) residues, while it has weaker activity for dimethylated H3 'Lys-36' (H3K36me2). Also catalyzes demethylation of non-histone proteins. Also catalyzes the hydroxylation of 60S ribosomal protein L8 on 'His-216', thereby playing a role in ribosome biogenesis. The polypeptide is Ribosomal oxygenase 1 (riox1) (Danio rerio (Zebrafish)).